We begin with the raw amino-acid sequence, 383 residues long: Cytochrome b (383 aa).

4 helical membrane passes run 32–52 (FGSL…FLAM), 76–98 (WLIR…CHIA), 113–133 (TWSI…LGYV), and 179–199 (FFSL…AHMI). 2 residues coordinate heme b: His-82 and His-96. Heme b contacts are provided by His-183 and His-197. Residue His-202 participates in a ubiquinone binding. The next 4 membrane-spanning stretches (helical) occupy residues 225–245 (FIFK…IFVC), 289–309 (LLGV…PLTD), 321–341 (LMKL…WIGA), and 348–368 (YLEV…FIVP).

The protein belongs to the cytochrome b family. As to quaternary structure, fungal cytochrome b-c1 complex contains 10 subunits; 3 respiratory subunits, 2 core proteins and 5 low-molecular weight proteins. Cytochrome b-c1 complex is a homodimer. Heme b is required as a cofactor.

It is found in the mitochondrion inner membrane. Functionally, component of the ubiquinol-cytochrome c reductase complex (complex III or cytochrome b-c1 complex) that is part of the mitochondrial respiratory chain. The b-c1 complex mediates electron transfer from ubiquinol to cytochrome c. Contributes to the generation of a proton gradient across the mitochondrial membrane that is then used for ATP synthesis. This chain is Cytochrome b (cob), found in Schizophyllum commune (Split gill fungus).